Here is a 619-residue protein sequence, read N- to C-terminus: Protein CPn_1016/CP_0837/CPj1016/CpB1054 (619 aa).

The disordered stretch occupies residues 591 to 619; sequence NAKKSEEQTSPQETPEVIRVSYPTTTSAL.

This sequence belongs to the chlamydial CPn_1016/CT_858/TC_0248 family.

The polypeptide is Protein CPn_1016/CP_0837/CPj1016/CpB1054 (Chlamydia pneumoniae (Chlamydophila pneumoniae)).